Consider the following 119-residue polypeptide: Large ribosomal subunit protein bL20 (119 aa).

It belongs to the bacterial ribosomal protein bL20 family.

In terms of biological role, binds directly to 23S ribosomal RNA and is necessary for the in vitro assembly process of the 50S ribosomal subunit. It is not involved in the protein synthesizing functions of that subunit. This Halalkalibacterium halodurans (strain ATCC BAA-125 / DSM 18197 / FERM 7344 / JCM 9153 / C-125) (Bacillus halodurans) protein is Large ribosomal subunit protein bL20.